The following is a 465-amino-acid chain: Argininosuccinate lyase (465 aa).

This sequence belongs to the lyase 1 family. Argininosuccinate lyase subfamily.

It localises to the cytoplasm. The catalysed reaction is 2-(N(omega)-L-arginino)succinate = fumarate + L-arginine. The protein operates within amino-acid biosynthesis; L-arginine biosynthesis; L-arginine from L-ornithine and carbamoyl phosphate: step 3/3. This is Argininosuccinate lyase from Desulfatibacillum aliphaticivorans.